Consider the following 78-residue polypeptide: Large ribosomal subunit protein bL28 (78 aa).

It belongs to the bacterial ribosomal protein bL28 family.

The chain is Large ribosomal subunit protein bL28 from Methylobacillus flagellatus (strain ATCC 51484 / DSM 6875 / VKM B-1610 / KT).